The primary structure comprises 235 residues: Fibrillarin-like rRNA/tRNA 2'-O-methyltransferase (235 aa).

Residues 91-92, 110-111, 137-138, and 157-160 each bind S-adenosyl-L-methionine; these read TT, EF, DA, and DVAQ.

This sequence belongs to the methyltransferase superfamily. Fibrillarin family. As to quaternary structure, interacts with nop5. Component of box C/D small ribonucleoprotein (sRNP) particles that contain rpl7ae, FlpA and nop5, plus a guide RNA.

Functionally, involved in pre-rRNA and tRNA processing. Utilizes the methyl donor S-adenosyl-L-methionine to catalyze the site-specific 2'-hydroxyl methylation of ribose moieties in rRNA and tRNA. Site specificity is provided by a guide RNA that base pairs with the substrate. Methylation occurs at a characteristic distance from the sequence involved in base pairing with the guide RNA. The chain is Fibrillarin-like rRNA/tRNA 2'-O-methyltransferase from Pyrobaculum islandicum (strain DSM 4184 / JCM 9189 / GEO3).